A 227-amino-acid chain; its full sequence is LysM and putative peptidoglycan-binding domain-containing protein 1 (227 aa).

S23 and S33 each carry phosphoserine. Positions 40-84 (LEHQLEPGDTLAGLALKYGVTMEQIKRTNRLYTNDSIFLKKTLYI) constitute a LysM domain. Residues 95–157 (NGLDSEEEEN…PSHDLSASDF (63 aa)) form a disordered region. Residues 98–108 (DSEEEENDGEE) show a composition bias toward acidic residues. The residue at position 99 (S99) is a Phosphoserine. Positions 143–152 (QGTSTPSHDL) are enriched in polar residues. Phosphoserine is present on residues S166, S181, S194, and S212. The tract at residues 169–227 (KKAAAQKLRKGESGVPEEDTGLYPSSPRMQQRAVLGPVPLTRTSRTQTLRDQEDEIFKL) is disordered. Residues 216-227 (TLRDQEDEIFKL) show a composition bias toward basic and acidic residues.

The polypeptide is LysM and putative peptidoglycan-binding domain-containing protein 1 (Lysmd1) (Rattus norvegicus (Rat)).